A 311-amino-acid chain; its full sequence is Pyrimidine-specific ribonucleoside hydrolase RihA (311 aa).

His240 is a catalytic residue.

It belongs to the IUNH family. RihA subfamily.

In terms of biological role, hydrolyzes with equal efficiency cytidine or uridine to ribose and cytosine or uracil, respectively. This is Pyrimidine-specific ribonucleoside hydrolase RihA from Escherichia coli O9:H4 (strain HS).